We begin with the raw amino-acid sequence, 435 residues long: MLDSKLLRTELDETAAKLARRGFKLDVETIGKLEEQRKSIQVEVENLQSTRNSISKQIGQLMSAGDKEGAEKIKQQIGSLGSDLDVKKIELDAVMAQLDDIILSVPNIPADEVPNGKDENDNLEISRWGEPKSYDFELKDHVDLGEMGDGLDFASAVKITGARFIVMKGQFARLHRAIAQFMLDLHTEEHGYTEMYVPYLVNADSLFGTGQLPKFGKDLFHTEPLTEKASDEEPRKLSLIPTAEVPVTNLVRDTISDEADLPLKMTAHTPCFRSEAGSYGRDTRGLIRMHQFDKVELVQITKPEDSMNALEELTGHAEKVLQLLELPYRKVLLCTGDMGFGSHKTYDLEVWVPAQNTYREISSCSNMWDFQARRMQARFRRKGEKKPELVHTLNGSGLAVGRTMVAILENNQEADGRIAIPTVLQKYMGGATHIG.

242 to 244 (TAE) lines the L-serine pocket. 273–275 (RSE) is an ATP binding site. Glu-296 serves as a coordination point for L-serine. ATP is bound at residue 360 to 363 (EISS). Position 396 (Ser-396) interacts with L-serine.

This sequence belongs to the class-II aminoacyl-tRNA synthetase family. Type-1 seryl-tRNA synthetase subfamily. As to quaternary structure, homodimer. The tRNA molecule binds across the dimer.

The protein localises to the cytoplasm. The catalysed reaction is tRNA(Ser) + L-serine + ATP = L-seryl-tRNA(Ser) + AMP + diphosphate + H(+). It catalyses the reaction tRNA(Sec) + L-serine + ATP = L-seryl-tRNA(Sec) + AMP + diphosphate + H(+). It participates in aminoacyl-tRNA biosynthesis; selenocysteinyl-tRNA(Sec) biosynthesis; L-seryl-tRNA(Sec) from L-serine and tRNA(Sec): step 1/1. Functionally, catalyzes the attachment of serine to tRNA(Ser). Is also able to aminoacylate tRNA(Sec) with serine, to form the misacylated tRNA L-seryl-tRNA(Sec), which will be further converted into selenocysteinyl-tRNA(Sec). The sequence is that of Serine--tRNA ligase from Vibrio vulnificus (strain YJ016).